Consider the following 662-residue polypeptide: Aprataxin-like protein (662 aa).

The region spanning 4–108 (SSALIKDISK…ISKDFVSTSL (105 aa)) is the HIT domain. The C2H2-type zinc-finger motif lies at 381-403 (LRCNQCEFVTNMLLDLKAHLYQH). A disordered region spans residues 482 to 662 (KNINGPSVNM…PAPPSNSKPS (181 aa)). Over residues 490-500 (NMMNQNNPNNP) the composition is skewed to low complexity. 2 stretches are compositionally biased toward polar residues: residues 501–513 (FRNT…QSQK) and 560–569 (GHQQFPNASS). A compositionally biased stretch (gly residues) spans 570-582 (VGGGQTGLPGQGQ). Residues 588 to 599 (WNSNKIFNQQNR) are compositionally biased toward polar residues. Residues 600-626 (QNTVQAQPQAQNQQTNQQQIQNSNKNQ) are compositionally biased toward low complexity. A compositionally biased stretch (pro residues) spans 653 to 662 (PAPPSNSKPS).

It is found in the nucleus. Its function is as follows. DNA-binding protein involved in single-strand DNA break repair, double-strand DNA break repair and base excision repair. Resolves abortive DNA ligation intermediates formed either at base excision sites, or when DNA ligases attempt to repair non-ligatable breaks induced by reactive oxygen species. Catalyzes the release of adenylate groups covalently linked to 5'-phosphate termini, resulting in the production of 5'-phosphate termini that can be efficiently rejoined. The protein is Aprataxin-like protein of Drosophila melanogaster (Fruit fly).